The chain runs to 565 residues: MGGRLNDLIQVAYGGKNVILSMMKNKTRQTSSVFINNLNSLNNNNNNISLKDKFKDLKDLKDNLNEKKINNDNDDDDEDNLIFDEKKDFLNENKNPELNYIKSKGHKIPSSQTSRFWEFTKLAVGVGAGFLGEKTKRTIDSSSSSSSPSSSYSAIFTDTNAERMAESFSRMRGAALKIGQVLSIQDESFLPPKFVEILDRVRKNANPIPLEQLYNTMSNELGENWRSKFQLFQDDPIAAASIGQVHRAITLDGKEVAVKVQYPGVADSITSDIKNLSSLLKMIVPETAYIEKSLESARSELLLETDYLNEASNQLKFKSLLESSINSGTNGSFKYLKDLYVPNVIMELTTKRILTTEFVHGTSIDKITIENHNQETRDWISKNILSLCLAELFEFNFMQVDPNWTNFVVDFENKRINLLDFGACRNYKSEFLFNYLKSIEGGVNRDINQILEYSLKLGYLTGDENKQMNDAQAKSILILSEPFSKLYYKENNLKTYPFNEKQIAKRISQLIPTMLKNRLKPPPEETYSLHRKLSGCYLVCSKLKSNINSTLIFNHFKNIFYKNYK.

Positions 44–77 (NNNNISLKDKFKDLKDLKDNLNEKKINNDNDDDD) form a coiled coil. One can recognise a Protein kinase domain in the interval 231 to 565 (LFQDDPIAAA…FKNIFYKNYK (335 aa)). Residues 237 to 245 (IAAASIGQV) and K259 contribute to the ATP site. D401 acts as the Proton acceptor in catalysis.

Belongs to the protein kinase superfamily. ADCK protein kinase family.

The polypeptide is Probable serine/threonine-protein kinase abkA (abkA) (Dictyostelium discoideum (Social amoeba)).